The chain runs to 372 residues: 3-galactosyl-N-acetylglucosaminide 4-alpha-L-fucosyltransferase FUT3 (372 aa).

At 1 to 15 the chain is on the cytoplasmic side; that stretch reads MDPLGAAKPQWPWRR. Residues 16–34 traverse the membrane as a helical; Signal-anchor for type II membrane protein segment; it reads CLAALLFQLLVAVCFFSYL. Residues 35-372 lie on the Lumenal side of the membrane; the sequence is RVSRDDATGS…TMRSIAAWFT (338 aa). A disordered region spans residues 40-69; it reads DATGSPRPGLMAVEPVTGAPSGSSRQDTTP. Asn-165 and Asn-196 each carry an N-linked (GlcNAc...) asparagine glycan.

This sequence belongs to the glycosyltransferase 10 family. In terms of processing, glycosylated.

The protein localises to the golgi apparatus. It is found in the golgi stack membrane. It carries out the reaction a beta-D-galactosyl-(1-&gt;3)-N-acetyl-beta-D-glucosaminyl derivative + GDP-beta-L-fucose = a beta-D-galactosyl-(1-&gt;3)-[alpha-L-fucosyl-(1-&gt;4)]-N-acetyl-beta-D-glucosaminyl derivative + GDP + H(+). The catalysed reaction is an N-acetyl-alpha-neuraminyl-(2-&gt;3)-beta-D-galactosyl-(1-&gt;4)-N-acetyl-beta-D-glucosaminyl derivative + GDP-beta-L-fucose = an alpha-Neu5Ac-(2-&gt;3)-beta-D-Gal-(1-&gt;4)-[alpha-L-Fuc-(1-&gt;3)]-beta-D-GlcNAc derivative + GDP + H(+). The enzyme catalyses a beta-D-galactosyl-(1-&gt;4)-N-acetyl-beta-D-glucosaminyl derivative + GDP-beta-L-fucose = a beta-D-galactosyl-(1-&gt;4)-[alpha-L-fucosyl-(1-&gt;3)]-N-acetyl-beta-D-glucosaminyl derivative + GDP + H(+). It catalyses the reaction an alpha-Neu5Ac-(2-&gt;3)-beta-D-Gal-(1-&gt;4)-beta-D-GlcNAc-(1-&gt;3)-beta-D-Gal-(1-&gt;4)-[alpha-L-Fuc-(1-&gt;3)]-beta-D-GlcNAc derivative + GDP-beta-L-fucose = an alpha-Neu5Ac-(2-&gt;3)-beta-D-Gal-(1-&gt;4)-[alpha-L-Fuc-(1-&gt;3)]-beta-D-GlcNAc-(1-&gt;3)-beta-D-Gal-(1-&gt;4)-[alpha-L-Fuc-(1-&gt;3)]-beta-D-GlcNAc derivative + GDP + H(+). It carries out the reaction Lc4Cer + GDP-beta-L-fucose = a lactoside III(4)-a-Fuc-Lc4Cer + GDP + H(+). The catalysed reaction is a beta-D-Gal-(1-&gt;3)-beta-D-GlcNAc-(1-&gt;3)-beta-D-Gal-(1-&gt;4)-beta-D-Glc-(1&lt;-&gt;1')-Cer(d18:1(4E)) + GDP-beta-L-fucose = a III(4)-a-Fuc-Lc4Cer(d18:1(4E)) + GDP + H(+). The enzyme catalyses N-acetyl-alpha-neuraminosyl-(2-&gt;3)-beta-D-galactosyl-(1-&gt;3)-[N-acetyl-alpha-neuraminosyl-(2-&gt;6)]-N-acetyl-beta-D-glucosaminyl-(1-&gt;3)-beta-D-galactosyl-(1-&gt;4)-beta-D-glucosyl-(1&lt;-&gt;1')-N-acyl-sphing-4-enine + GDP-beta-L-fucose = N-acetyl-alpha-neuraminosyl-(2-&gt;3)-beta-D-galactosyl-(1-&gt;3)-alpha-L-fucosyl-(1-&gt;4)-[N-acetyl-alpha-neuraminosyl-(2-&gt;6)-N-acetyl-beta-D-glucosaminyl-(1-&gt;3)]-beta-D-galactosyl-(1-&gt;4)-beta-D-glucosyl-(1&lt;-&gt;1')-N-acyl-sphing-4-enine + GDP + H(+). It catalyses the reaction N-acetyl-alpha-neuraminosyl-(2-&gt;3)-beta-D-galactosyl-(1-&gt;3)-N-acetyl-beta-D-glucosaminyl-(1-&gt;3)-beta-D-galactosyl-(1-&gt;4)-beta-D-glucosyl-(1&lt;-&gt;1')-N-acyl-sphing-4-enine + GDP-beta-L-fucose = N-acetyl-alpha-neuraminosyl-(2-&gt;3)-beta-D-galactosyl-(1-&gt;3)-alpha-L-fucosyl-(1-&gt;4)-[N-acetyl-beta-D-glucosaminyl-(1-&gt;3)]-beta-D-galactosyl-(1-&gt;4)-beta-D-glucosyl-(1&lt;-&gt;1')-N-acyl-sphing-4-enine + GDP + H(+). It carries out the reaction beta-D-galactosyl-(1-&gt;3)-N-acetyl-D-glucosamine + GDP-beta-L-fucose = beta-D-galactosyl-(1-&gt;3)-[alpha-L-fucosyl-(1-&gt;4)]-N-acetyl-D-glucosamine + GDP + H(+). The catalysed reaction is alpha-L-Fuc-(1-&gt;2)-beta-D-Gal-(1-&gt;3)-D-GlcNAc + GDP-beta-L-fucose = alpha-L-Fuc-(1-&gt;2)-beta-D-Gal-(1-&gt;3)-[alpha-L-Fuc-(1-&gt;4)]-D-GlcNAc + GDP + H(+). The enzyme catalyses alpha-L-Fuc-(1-&gt;2)-beta-D-Gal-(1-&gt;4)-D-GlcNAc + GDP-beta-L-fucose = alpha-L-Fuc-(1-&gt;2)-beta-D-Gal-(1-&gt;4)-[alpha-L-Fuc-(1-&gt;3)]-D-GlcNAc + GDP + H(+). It catalyses the reaction beta-D-galactosyl-(1-&gt;4)-N-acetyl-D-glucosamine + GDP-beta-L-fucose = beta-D-galactosyl-(1-&gt;4)-[alpha-L-fucosyl-(1-&gt;3)]-N-acetyl-D-glucosamine + GDP + H(+). It carries out the reaction lactose + GDP-beta-L-fucose = beta-D-galactosyl-(1-&gt;4)-[alpha-L-fucosyl-(1-&gt;3)]-D-glucose + GDP + H(+). The catalysed reaction is an alpha-Neu5Ac-(2-&gt;3)-beta-D-Gal-(1-&gt;3)-D-GlcNAc derivative + GDP-beta-L-fucose = an alpha-Neu5Ac-(2-&gt;3)-beta-D-Gal-(1-&gt;3)-[alpha-L-Fuc-(1-&gt;4)]-beta-D-GlcNAc derivative + GDP + H(+). The protein operates within protein modification; protein glycosylation. In terms of biological role, catalyzes the transfer of L-fucose, from a guanosine diphosphate-beta-L-fucose, to both the subterminal N-acetyl glucosamine (GlcNAc) of type 1 chain (beta-D-Gal-(1-&gt;3)-beta-D-GlcNAc) glycolipids and oligosaccharides via an alpha(1,4) linkage, and the subterminal glucose (Glc) or GlcNAc of type 2 chain (beta-D-Gal-(1-&gt;4)-beta-D-GlcNAc) oligosaccharides via an alpha(1,3) linkage, independently of the presence of terminal alpha-L-fucosyl-(1,2) moieties on the terminal galactose of these acceptors and participates in the blood groups Lewis determination and expression of Lewis a (Le(a)), lewis b (Le(b)), Lewis x/SSEA-1 (Le(x)) and lewis y (Le(y)) antigens. Also catalyzes the transfer of L-fucose to subterminal GlcNAc of sialyl- and disialyl-lactotetraosylceramide to produce sialyl Lewis a (sLe(a)) and disialyl Lewis a via an alpha(1,4) linkage and therefore may regulate cell surface sialyl Lewis a expression and consequently regulates adhesive properties to E-selectin, cell proliferation and migration. Catalyzes the transfer of an L-fucose to 3'-sialyl-N-acetyllactosamine by an alpha(1,3) linkage, which allows the formation of sialyl-Lewis x structure and therefore may regulate the sialyl-Lewis x surface antigen expression and consequently adhesive properties to E-selectin. Prefers type 1 chain over type 2 acceptors. Type 1 tetrasaccharide is a better acceptor than type 1 disaccharide suggesting that a beta anomeric configuration of GlcNAc in the substrate is preferred. Lewis-positive (Le(+)) individuals have an active enzyme while Lewis-negative (Le(-)) individuals have an inactive enzyme. The chain is 3-galactosyl-N-acetylglucosaminide 4-alpha-L-fucosyltransferase FUT3 from Pan troglodytes (Chimpanzee).